Reading from the N-terminus, the 516-residue chain is Glycerol-3-phosphate dehydrogenase 1 (516 aa).

Aspartate 28–glutamate 56 contacts FAD.

It belongs to the FAD-dependent glycerol-3-phosphate dehydrogenase family. It depends on FAD as a cofactor.

The protein localises to the cytoplasm. It catalyses the reaction a quinone + sn-glycerol 3-phosphate = dihydroxyacetone phosphate + a quinol. The sequence is that of Glycerol-3-phosphate dehydrogenase 1 (glpD1) from Mycobacterium bovis (strain ATCC BAA-935 / AF2122/97).